We begin with the raw amino-acid sequence, 537 residues long: Putative cysteine ligase BshC (537 aa).

The stretch at 417–457 (ASEQFLNELDQLEAQQKETYERLAAEVQGNEDNKNLVEKNN) forms a coiled coil.

Belongs to the BshC family.

Its function is as follows. Involved in bacillithiol (BSH) biosynthesis. May catalyze the last step of the pathway, the addition of cysteine to glucosamine malate (GlcN-Mal) to generate BSH. The polypeptide is Putative cysteine ligase BshC (Staphylococcus carnosus (strain TM300)).